Here is a 439-residue protein sequence, read N- to C-terminus: MLTGVTDGIFCCLLGTPPNAVGPLESVESSDGYTFVEVKPGRVLRVKHAGPAPAAAPPPPSSASSDAAQGDLSGLVRCQRRITVYRNGRLLVENLGRAPRADLLHGQNGSGEPPAALEVELADPAGSDGRLAPGSAGSGSGSGSGGRRRRARRPKRTIHIDCEKRITSCKGAQADVVLFFIHGVGGSLAIWKEQLDFFVRLGYEVVAPDLAGHGASSAPQVAAAYTFYALAEDMRAIFKRYAKKRNVLIGHSYGVSFCTFLAHEYPDLVHKVIMINGGGPTALEPSFCSIFNMPTCVLHCLSPCLAWSFLKAGFARQGAKEKQLLKEGNAFNVSSFVLRAMMSGQYWPEGDEVYHAELTVPVLLVHGMHDKFVPVEEDQRMAEILLLAFLKLIDEGSHMVMLECPETVNTLLHEFLLWEPEPSPKALPEPLPAPPEDKK.

Disordered stretches follow at residues 49–70 (AGPA…AAQG) and 124–156 (PAGS…RPKR). Residues 136–145 (AGSGSGSGSG) are compositionally biased toward gly residues. Over residues 146-156 (GRRRRARRPKR) the composition is skewed to basic residues. Residues 177–279 (VLFFIHGVGG…HKVIMINGGG (103 aa)) form the AB hydrolase-1 domain. Catalysis depends on charge relay system residues Ser-252, Asp-370, and His-398.

This sequence belongs to the AB hydrolase superfamily. Interacts with NLRP3 (via NACHT and LLR domains); this interaction is enhanced in the presence of NLRP3 inflammasome inducers, such as ATP, nigericin, silica, or alum. Interacts with ZDHHC12. In terms of assembly, (Microbial infection) Interacts with SARS-CoV-2 nucleoprotein N; this interaction disrupts the NLRP3-ABHD8 association, enhancing NLRP3 stability, ultimately leading to increased inflammasome activation.

It localises to the cytoplasm. In terms of biological role, negatively regulates NLRP3-driven inflammation. Promotes NLRP3 degradation through the chaperone-mediated autophagy (CMA) pathway, hence attenuating inflammasome activation and IL1B secretion. Acts by recruiting palmitoyltransferase ZDHHC12 to NLRP3, facilitating NLRP3 palmitoylation and subsequent degradation. This is Protein ABHD8 from Homo sapiens (Human).